Reading from the N-terminus, the 122-residue chain is Large ribosomal subunit protein uL14c (122 aa).

The protein belongs to the universal ribosomal protein uL14 family. Part of the 50S ribosomal subunit.

It is found in the plastid. The protein resides in the chloroplast. Functionally, binds to 23S rRNA. This chain is Large ribosomal subunit protein uL14c, found in Amborella trichopoda.